We begin with the raw amino-acid sequence, 177 residues long: tRNA (cytidine(56)-2'-O)-methyltransferase (177 aa).

Residues Leu84 and 109–113 (GAEKV) each bind S-adenosyl-L-methionine.

Belongs to the aTrm56 family. As to quaternary structure, homodimer.

It is found in the cytoplasm. It catalyses the reaction cytidine(56) in tRNA + S-adenosyl-L-methionine = 2'-O-methylcytidine(56) in tRNA + S-adenosyl-L-homocysteine + H(+). In terms of biological role, specifically catalyzes the AdoMet-dependent 2'-O-ribose methylation of cytidine at position 56 in tRNAs. The chain is tRNA (cytidine(56)-2'-O)-methyltransferase from Methanosarcina acetivorans (strain ATCC 35395 / DSM 2834 / JCM 12185 / C2A).